We begin with the raw amino-acid sequence, 220 residues long: GILT-like protein CBG03282 (220 aa).

The N-terminal stretch at Met-1–Ser-22 is a signal peptide. Asn-131 is a glycosylation site (N-linked (GlcNAc...) asparagine).

Belongs to the GILT family.

The protein localises to the secreted. This Caenorhabditis briggsae protein is GILT-like protein CBG03282.